The primary structure comprises 716 residues: Tensin-4 (716 aa).

The first 17 residues, 1-17 (MSQVMSSPLLAGGPAVG), serve as a signal peptide directing secretion. 4 disordered regions span residues 119 to 274 (LPPG…VSML), 301 to 322 (QSSS…NLGP), 334 to 366 (VPSN…PSIT), and 379 to 436 (GFPE…RDMQ). Over residues 138–150 (KKKEEPEALDIKY) the composition is skewed to basic and acidic residues. The span at 197–206 (SSESLIFSGS) shows a compositional bias: polar residues. Over residues 214–228 (PAPPSAVPSSHPPTS) the composition is skewed to pro residues. Residue serine 248 is modified to Phosphoserine. The span at 265 to 274 (PQLSSRVSML) shows a compositional bias: polar residues. The span at 402-419 (ATSSSMPCPATRSHSQTL) shows a compositional bias: polar residues. Positions 449 to 556 (WFKPSISREQ…ALPCKLVIPQ (108 aa)) constitute an SH2 domain. In terms of domain architecture, PTB spans 583-704 (CHALYLSSVS…TLQPASQVIR (122 aa)).

The protein belongs to the PTEN phosphatase protein family. In terms of assembly, interacts (via SH2 domain) with Rho GTPase-activating protein DLC1 (via C-terminus); the interaction is independent of DLC1 tyrosine phosphorylation. Interacts with integrin ITGB1; the interaction displaces tensin TNS3 from the ITGB1 cytoplasmic tail and promotes ITGB1 stability. Interacts (via SH2 domain) with E3 ubiquitin-protein ligase CBL (phosphorylated on 'Tyr-782'); the interaction is enhanced in the presence of EGF and reduces interaction of CBL with EGFR. Interacts (via SH2 domain) with receptor tyrosine kinase MET (when phosphorylated); the interaction increases MET protein stability.

Its subcellular location is the cell junction. The protein localises to the focal adhesion. It localises to the cytoplasm. It is found in the cytoskeleton. Promotes EGF-induced cell migration by displacing tensin TNS3 from the cytoplasmic tail of integrin ITGB1 which results in dissociation of TNS3 from focal adhesions, disassembly of actin stress fibers and initiation of cell migration. Suppresses ligand-induced degradation of EGFR by reducing EGFR ubiquitination in the presence of EGF. Increases MET protein stability by inhibiting MET endocytosis and subsequent lysosomal degradation which leads to increased cell survival, proliferation and migration. This chain is Tensin-4 (TNS4), found in Bos taurus (Bovine).